A 426-amino-acid polypeptide reads, in one-letter code: Phytoene synthase 3, chloroplastic (426 aa).

The transit peptide at 1-52 (MMSTSRAVKSPACAARRRQWSADAPNRTATFLACRHGRRLGGGGGAPCSVRA) directs the protein to the chloroplast.

The protein belongs to the phytoene/squalene synthase family. Expressed in roots and endosperm.

It is found in the plastid. Its subcellular location is the chloroplast. The protein localises to the plastoglobule. It catalyses the reaction 2 (2E,6E,10E)-geranylgeranyl diphosphate = 15-cis-phytoene + 2 diphosphate. Its function is as follows. Catalyzes the conversion of geranylgeranyl diphosphate to phytoene. Mediates the first committed step in carotenoid biosynthesis. May play a role in regulating carotenoid flux in response to abiotic stress in roots. May control flux to carotenoid precursors that are required for abiotic stress-induced abscisic acid (ABA) formation in roots. This Zea mays (Maize) protein is Phytoene synthase 3, chloroplastic.